Consider the following 185-residue polypeptide: MADTDAAPAAPAPSTPKKAAKKKASKPKTPASHPKYSDMIASALESLKEKKGSSRQAILKYVKANFTVGDNANVHIKQALKRGVTSGQLRHVKGSGASGSFLLAEKTKTPKKAAAKKATPKKKPAAKKTKKPAAKKATKKPAKKPAAKKKVAKPAAKKAAKPVAKKATPKKKVVKKAAKGKGKKK.

Disordered regions lie at residues 1-37 (MADT…PKYS) and 90-185 (RHVK…GKKK). An H15 domain is found at 32 to 105 (SHPKYSDMIA…GASGSFLLAE (74 aa)). Residues 109–185 (TPKKAAAKKA…KAAKGKGKKK (77 aa)) are compositionally biased toward basic residues.

This sequence belongs to the histone H1/H5 family.

It localises to the nucleus. Its subcellular location is the chromosome. Its function is as follows. Histones H1 are necessary for the condensation of nucleosome chains into higher-order structures. The sequence is that of Histone H1-delta from Strongylocentrotus purpuratus (Purple sea urchin).